A 77-amino-acid chain; its full sequence is MAYTYKMVQVPPNIIANRKNITTAAADYLQDVVNEWAENGWEFWRIDNFSTEEKAGCLSGGKLTMRTYKVITFRKEV.

This is an uncharacterized protein from Haemophilus phage HP1 (strain HP1c1) (Bacteriophage HP1).